The following is a 585-amino-acid chain: Proline--tRNA ligase (585 aa).

An Isoglutamyl lysine isopeptide (Lys-Gln) (interchain with Q-Cter in protein Pup) cross-link involves residue K173.

It belongs to the class-II aminoacyl-tRNA synthetase family. ProS type 1 subfamily. As to quaternary structure, homodimer.

Its subcellular location is the cytoplasm. The enzyme catalyses tRNA(Pro) + L-proline + ATP = L-prolyl-tRNA(Pro) + AMP + diphosphate. Catalyzes the attachment of proline to tRNA(Pro) in a two-step reaction: proline is first activated by ATP to form Pro-AMP and then transferred to the acceptor end of tRNA(Pro). As ProRS can inadvertently accommodate and process non-cognate amino acids such as alanine and cysteine, to avoid such errors it has two additional distinct editing activities against alanine. One activity is designated as 'pretransfer' editing and involves the tRNA(Pro)-independent hydrolysis of activated Ala-AMP. The other activity is designated 'posttransfer' editing and involves deacylation of mischarged Ala-tRNA(Pro). The misacylated Cys-tRNA(Pro) is not edited by ProRS. This chain is Proline--tRNA ligase (proS), found in Mycolicibacterium smegmatis (strain ATCC 700084 / mc(2)155) (Mycobacterium smegmatis).